The following is a 430-amino-acid chain: Replication factor C large subunit (430 aa).

Residue 75-82 (GPPGTGKT) participates in ATP binding.

It belongs to the activator 1 small subunits family. RfcL subfamily. As to quaternary structure, heteromultimer composed of small subunits (RfcS) and large subunits (RfcL).

Its function is as follows. Part of the RFC clamp loader complex which loads the PCNA sliding clamp onto DNA. The chain is Replication factor C large subunit from Nanoarchaeum equitans (strain Kin4-M).